The chain runs to 108 residues: VQ motif-containing protein 10 (108 aa).

The short motif at 29 to 38 (FKTVVQELTG) is the VQ element. Positions 65–85 (IGEDTRQLHGGGGGGGRMGTT) are disordered. A compositionally biased stretch (gly residues) spans 73–82 (HGGGGGGGRM).

In terms of assembly, interacts with WRKY25, WRKY26 and WRKY33.

It localises to the nucleus. Functionally, may modulate WRKY transcription factor activities. The chain is VQ motif-containing protein 10 from Arabidopsis thaliana (Mouse-ear cress).